The chain runs to 121 residues: Large ribosomal subunit protein uL22c (121 aa).

It belongs to the universal ribosomal protein uL22 family. In terms of assembly, part of the 50S ribosomal subunit.

It is found in the plastid. The protein resides in the chloroplast. In terms of biological role, this protein binds specifically to 23S rRNA. Its function is as follows. The globular domain of the protein is located near the polypeptide exit tunnel on the outside of the subunit, while an extended beta-hairpin is found that lines the wall of the exit tunnel in the center of the 70S ribosome. This chain is Large ribosomal subunit protein uL22c (rpl22), found in Lemna minor (Common duckweed).